We begin with the raw amino-acid sequence, 76 residues long: Small ribosomal subunit protein bS18 (76 aa).

This sequence belongs to the bacterial ribosomal protein bS18 family. As to quaternary structure, part of the 30S ribosomal subunit. Forms a tight heterodimer with protein bS6.

Functionally, binds as a heterodimer with protein bS6 to the central domain of the 16S rRNA, where it helps stabilize the platform of the 30S subunit. This Ectopseudomonas mendocina (strain ymp) (Pseudomonas mendocina) protein is Small ribosomal subunit protein bS18.